The sequence spans 515 residues: Putative pumilio homolog 8, chloroplastic (515 aa).

The segment at 1 to 33 is disordered; that stretch reads MMRGEFGEASSLSRSPSSPLQTEPHPQSPKFYR. Residues 1 to 70 constitute a chloroplast transit peptide; it reads MMRGEFGEAS…LSSYFSNGLC (70 aa). Residues 10–20 are compositionally biased toward low complexity; it reads SSLSRSPSSPL. The PUM-HD domain occupies 174–515; that stretch reads SGVGALFDHQ…RIFSRNLLKN (342 aa). 8 Pumilio repeats span residues 198-233, 234-269, 270-308, 310-345, 346-381, 382-417, 418-456, and 457-490; these read EFQGYVYFMAKDQHGCRFLQWIFEDGSALDALVIFS, EVIPHVVELMMDPFGNYLMQKLLDVCNEEQRTQIIL, MVTSEPGQLIRISLNAYGTRVVQRLVESIKTRKQISLVK, ALRPGFLNLIRDLNGNHVIQRCLQCLSTEDNEFIFE, DATKFCIDIATHRHGCCVLQKCIAYSSGLQREKLVT, EISRNSLFLAQDPYGNYAVQFVLELRDFSAIAAMLA, QLKGHYVELSMQKFSSHMVERCLTHCPESRPQIVRELIS, and VPHFDILIQDPYANFVIQAALAVTKGSLHATLVE.

It localises to the plastid. It is found in the chloroplast. Its subcellular location is the cytoplasm. Its function is as follows. Sequence-specific RNA-binding protein that regulates translation and mRNA stability by binding the 3'-UTR of target mRNAs. The protein is Putative pumilio homolog 8, chloroplastic (APUM8) of Arabidopsis thaliana (Mouse-ear cress).